The chain runs to 481 residues: Cysteine--tRNA ligase (481 aa).

Cys-27 serves as a coordination point for Zn(2+). A 'HIGH' region motif is present at residues 29–39; the sequence is PTVYNYAHIGN. Positions 222, 247, and 251 each coordinate Zn(2+). The short motif at 279-283 is the 'KMSKS' region element; it reads KMSKS. An ATP-binding site is contributed by Lys-282.

This sequence belongs to the class-I aminoacyl-tRNA synthetase family. As to quaternary structure, monomer. Requires Zn(2+) as cofactor.

It localises to the cytoplasm. The catalysed reaction is tRNA(Cys) + L-cysteine + ATP = L-cysteinyl-tRNA(Cys) + AMP + diphosphate. This is Cysteine--tRNA ligase from Borrelia turicatae (strain 91E135).